A 153-amino-acid polypeptide reads, in one-letter code: 3-hydroxyacyl-[acyl-carrier-protein] dehydratase FabZ (153 aa).

H57 is a catalytic residue.

The protein belongs to the thioester dehydratase family. FabZ subfamily.

The protein resides in the cytoplasm. The enzyme catalyses a (3R)-hydroxyacyl-[ACP] = a (2E)-enoyl-[ACP] + H2O. Involved in unsaturated fatty acids biosynthesis. Catalyzes the dehydration of short chain beta-hydroxyacyl-ACPs and long chain saturated and unsaturated beta-hydroxyacyl-ACPs. This chain is 3-hydroxyacyl-[acyl-carrier-protein] dehydratase FabZ, found in Vibrio cholerae serotype O1 (strain ATCC 39315 / El Tor Inaba N16961).